Here is a 228-residue protein sequence, read N- to C-terminus: LexA repressor (228 aa).

The segment at residues phenylalanine 26–threonine 46 is a DNA-binding region (H-T-H motif). Catalysis depends on for autocatalytic cleavage activity residues serine 149 and lysine 187.

The protein belongs to the peptidase S24 family. As to quaternary structure, homodimer.

The catalysed reaction is Hydrolysis of Ala-|-Gly bond in repressor LexA.. Functionally, represses a number of genes involved in the response to DNA damage (SOS response), including recA and lexA. In the presence of single-stranded DNA, RecA interacts with LexA causing an autocatalytic cleavage which disrupts the DNA-binding part of LexA, leading to derepression of the SOS regulon and eventually DNA repair. This chain is LexA repressor, found in Jannaschia sp. (strain CCS1).